Reading from the N-terminus, the 113-residue chain is MTSDLSSKHCESCEGIGAALNSEQIKNLLPQLNTKWEVTEDNRIIKRAFSFKNFYETMAFVNAIAWIANIENHHPDLEVGYNYCHVHFMTHALNGLTHNDFICAAKIDKLLVD.

This sequence belongs to the pterin-4-alpha-carbinolamine dehydratase family.

The enzyme catalyses (4aS,6R)-4a-hydroxy-L-erythro-5,6,7,8-tetrahydrobiopterin = (6R)-L-erythro-6,7-dihydrobiopterin + H2O. This Legionella pneumophila (strain Lens) protein is Putative pterin-4-alpha-carbinolamine dehydratase.